We begin with the raw amino-acid sequence, 101 residues long: Urease subunit beta (101 aa).

This sequence belongs to the urease beta subunit family. Heterotrimer of UreA (gamma), UreB (beta) and UreC (alpha) subunits. Three heterotrimers associate to form the active enzyme.

The protein resides in the cytoplasm. It carries out the reaction urea + 2 H2O + H(+) = hydrogencarbonate + 2 NH4(+). Its pathway is nitrogen metabolism; urea degradation; CO(2) and NH(3) from urea (urease route): step 1/1. This Burkholderia thailandensis (strain ATCC 700388 / DSM 13276 / CCUG 48851 / CIP 106301 / E264) protein is Urease subunit beta.